The chain runs to 279 residues: MLKILSPAKVNLHLRVLRKREDNYHDLATLMQKVSLYDELEFQPSNRGIQLRCPGFFLPENEENIVFRAAKKILSFSGCPTGVTITLRKNIPLAAGLGGGSSNAAMTLLALNKLFRLNFSTGELMKIGATLGADVPFFLFHGPAWAYGIGDRLKAALDVPKVWFVLINPGFEVSTRVIYEKLNLGLTKEIIHYSIPRFLSMEDMAAGLHNDLESVTLKMHPSLQEIKDLLCSYGAAGALMSGSGPTVFGIFENEDKAKEAETVLGKPGTWAVFCVRSID.

Lys9 is an active-site residue. Residue Pro92 to Ser102 coordinates ATP. Asp134 is an active-site residue.

Belongs to the GHMP kinase family. IspE subfamily.

The enzyme catalyses 4-CDP-2-C-methyl-D-erythritol + ATP = 4-CDP-2-C-methyl-D-erythritol 2-phosphate + ADP + H(+). It functions in the pathway isoprenoid biosynthesis; isopentenyl diphosphate biosynthesis via DXP pathway; isopentenyl diphosphate from 1-deoxy-D-xylulose 5-phosphate: step 3/6. Catalyzes the phosphorylation of the position 2 hydroxy group of 4-diphosphocytidyl-2C-methyl-D-erythritol. The protein is 4-diphosphocytidyl-2-C-methyl-D-erythritol kinase of Syntrophus aciditrophicus (strain SB).